The sequence spans 167 residues: Lipoprotein signal peptidase (167 aa).

The next 3 membrane-spanning stretches (helical) occupy residues 10 to 30 (LIWL…KAWV), 68 to 88 (WQLW…AFWL), and 98 to 118 (SAVP…DRLM). Active-site residues include Asp124 and Asp142. The helical transmembrane segment at 138-158 (FNIADSAIVGGAIGIALFGLF) threads the bilayer.

The protein belongs to the peptidase A8 family.

The protein localises to the cell inner membrane. It catalyses the reaction Release of signal peptides from bacterial membrane prolipoproteins. Hydrolyzes -Xaa-Yaa-Zaa-|-(S,diacylglyceryl)Cys-, in which Xaa is hydrophobic (preferably Leu), and Yaa (Ala or Ser) and Zaa (Gly or Ala) have small, neutral side chains.. It participates in protein modification; lipoprotein biosynthesis (signal peptide cleavage). This protein specifically catalyzes the removal of signal peptides from prolipoproteins. In Xanthomonas campestris pv. campestris (strain 8004), this protein is Lipoprotein signal peptidase.